A 370-amino-acid chain; its full sequence is Protein PELPK1 (370 aa).

The N-terminal stretch at 1–34 is a signal peptide; the sequence is MALMKKSLSAALLSSPLLIICLIALLADPFSVGA. A run of 52 repeats spans residues 43–47, 49–53, 54–58, 60–64, 65–69, 71–75, 76–80, 82–86, 87–91, 93–97, 98–102, 104–108, 109–113, 115–119, 120–124, 126–130, 131–135, 137–141, 142–146, 148–152, 153–157, 159–163, 164–168, 175–179, 186–190, 192–196, 197–201, 203–207, 214–218, 219–223, 225–229, 231–235, 236–240, 242–246, 247–251, 253–257, 258–262, 264–268, 270–274, 275–279, 281–285, 286–290, 292–296, 303–307, 314–318, 319–323, 325–329, 330–334, 336–340, 344–348, 355–359, and 361–365. The tract at residues 43–365 is 52 X 5 AA tandem repeat of P-[DEGQ]-[AEFLIV]-[QPT]-K; sequence PEIPKLPELP…QLPKLPEFPK (323 aa). The span at 65–223 shows a compositional bias: basic and acidic residues; the sequence is PELPKLPEFP…PEIQKPELPK (159 aa). A disordered region spans residues 65–370; sequence PELPKLPEFP…PEFPKVPGTP (306 aa). The span at 232–262 shows a compositional bias: basic and acidic residues; the sequence is EIQKPELPKLPEVPKLEAPKVPEIQKPELPK. Basic and acidic residues-rich tracts occupy residues 271-296 and 306-334; these read EIQK…EVPK and PKSE…ELPK.

It localises to the secreted. The protein localises to the cell wall. Positive regulator of germination and plant growth. This chain is Protein PELPK1, found in Arabidopsis thaliana (Mouse-ear cress).